Here is a 248-residue protein sequence, read N- to C-terminus: Probable transcriptional regulatory protein BARBAKC583_0163 (248 aa).

The protein belongs to the TACO1 family.

The protein resides in the cytoplasm. This is Probable transcriptional regulatory protein BARBAKC583_0163 from Bartonella bacilliformis (strain ATCC 35685 / KC583 / Herrer 020/F12,63).